The primary structure comprises 364 residues: tRNA 2-selenouridine synthase (364 aa).

The 124-residue stretch at Leu-14–Ile-137 folds into the Rhodanese domain. The S-selanylcysteine intermediate role is filled by Cys-97.

It belongs to the SelU family. In terms of assembly, monomer.

The enzyme catalyses 5-methylaminomethyl-2-thiouridine(34) in tRNA + selenophosphate + (2E)-geranyl diphosphate + H2O + H(+) = 5-methylaminomethyl-2-selenouridine(34) in tRNA + (2E)-thiogeraniol + phosphate + diphosphate. It catalyses the reaction 5-methylaminomethyl-2-thiouridine(34) in tRNA + (2E)-geranyl diphosphate = 5-methylaminomethyl-S-(2E)-geranyl-thiouridine(34) in tRNA + diphosphate. The catalysed reaction is 5-methylaminomethyl-S-(2E)-geranyl-thiouridine(34) in tRNA + selenophosphate + H(+) = 5-methylaminomethyl-2-(Se-phospho)selenouridine(34) in tRNA + (2E)-thiogeraniol. It carries out the reaction 5-methylaminomethyl-2-(Se-phospho)selenouridine(34) in tRNA + H2O = 5-methylaminomethyl-2-selenouridine(34) in tRNA + phosphate. Functionally, involved in the post-transcriptional modification of the uridine at the wobble position (U34) of tRNA(Lys), tRNA(Glu) and tRNA(Gln). Catalyzes the conversion of 2-thiouridine (S2U-RNA) to 2-selenouridine (Se2U-RNA). Acts in a two-step process involving geranylation of 2-thiouridine (S2U) to S-geranyl-2-thiouridine (geS2U) and subsequent selenation of the latter derivative to 2-selenouridine (Se2U) in the tRNA chain. This chain is tRNA 2-selenouridine synthase, found in Escherichia coli (strain SMS-3-5 / SECEC).